The following is a 392-amino-acid chain: Formate-dependent phosphoribosylglycinamide formyltransferase (392 aa).

N(1)-(5-phospho-beta-D-ribosyl)glycinamide is bound by residues 22-23 (EL) and glutamate 82. ATP contacts are provided by residues arginine 114, lysine 155, 160 to 165 (SSGKGQ), 195 to 198 (EGLV), and glutamate 203. In terms of domain architecture, ATP-grasp spans 119 to 308 (RLAAETLGVP…EFALHVRAFL (190 aa)). Mg(2+) contacts are provided by glutamate 267 and glutamate 279. N(1)-(5-phospho-beta-D-ribosyl)glycinamide is bound by residues aspartate 286, lysine 355, and 362-363 (RR).

This sequence belongs to the PurK/PurT family. Homodimer.

The enzyme catalyses N(1)-(5-phospho-beta-D-ribosyl)glycinamide + formate + ATP = N(2)-formyl-N(1)-(5-phospho-beta-D-ribosyl)glycinamide + ADP + phosphate + H(+). The protein operates within purine metabolism; IMP biosynthesis via de novo pathway; N(2)-formyl-N(1)-(5-phospho-D-ribosyl)glycinamide from N(1)-(5-phospho-D-ribosyl)glycinamide (formate route): step 1/1. In terms of biological role, involved in the de novo purine biosynthesis. Catalyzes the transfer of formate to 5-phospho-ribosyl-glycinamide (GAR), producing 5-phospho-ribosyl-N-formylglycinamide (FGAR). Formate is provided by PurU via hydrolysis of 10-formyl-tetrahydrofolate. This chain is Formate-dependent phosphoribosylglycinamide formyltransferase, found in Pectobacterium carotovorum subsp. carotovorum (strain PC1).